A 150-amino-acid polypeptide reads, in one-letter code: uncharacterized protein (150 aa).

A run of 5 repeats spans residues phenylalanine 101 to asparagine 105, histidine 106 to asparagine 110, histidine 111 to asparagine 115, histidine 116 to asparagine 120, and histidine 121 to asparagine 125. The interval phenylalanine 101–asparagine 125 is 5 X 5 AA tandem repeats of [FH]-H-[EK]-[IV]-N.

The protein belongs to the asfivirus D129L family.

This is an uncharacterized protein from African swine fever virus (isolate Tick/Malawi/Lil 20-1/1983) (ASFV).